A 265-amino-acid chain; its full sequence is MNSRQMYETIKERLNAHPHWTFHFDAKHDTMRIEDHRTKKGVTISLPGVIAKWHEQKDEAVREIIYYVEETLKTMEETATLSGNERNIYPVIRSTSFPTETKEGVPLLHDDHTAETRIYYALDLGKTYRLIDEQMMEKEKWNRERVKEIARFNVRSLPTPVKEDRVADNVFYFVNTNDGYDASRILNDAFLAEMHTRMEGTMAIAVPHQDVLILADLRNDIGYDVLAQMTMSFFANGRVPITALSFLYENGKLEPIFILGKKRRT.

This sequence belongs to the UPF0354 family.

This is UPF0354 protein GTNG_2723 from Geobacillus thermodenitrificans (strain NG80-2).